The following is a 189-amino-acid chain: Development-specific protein LVN1.2 (189 aa).

As to expression, endoderm cells.

The polypeptide is Development-specific protein LVN1.2 (Lytechinus variegatus (Green sea urchin)).